A 163-amino-acid polypeptide reads, in one-letter code: Carbon monoxide dehydrogenase small chain (163 aa).

Residues 4-80 (KIITVNVNGK…GSEVLTVEGL (77 aa)) enclose the 2Fe-2S ferredoxin-type domain. 8 residues coordinate [2Fe-2S] cluster: cysteine 42, cysteine 47, cysteine 50, cysteine 62, cysteine 101, cysteine 104, cysteine 136, and cysteine 138.

As to quaternary structure, dimer of heterotrimers. Each heterotrimer consists of a large, a medium and a small subunit. It depends on [2Fe-2S] cluster as a cofactor.

It catalyses the reaction CO + a quinone + H2O = a quinol + CO2. In terms of biological role, catalyzes the oxidation of carbon monoxide to carbon dioxide. This is Carbon monoxide dehydrogenase small chain (cutS) from Hydrogenophaga pseudoflava (Pseudomonas carboxydoflava).